Reading from the N-terminus, the 394-residue chain is Phosphoglycerate kinase (394 aa).

Substrate-binding positions include 21 to 23, R36, 59 to 62, R118, and R151; these read DFN and HFGR. Residues K201, E323, and 349–352 contribute to the ATP site; that span reads GGDS.

Belongs to the phosphoglycerate kinase family. Monomer.

It localises to the cytoplasm. It carries out the reaction (2R)-3-phosphoglycerate + ATP = (2R)-3-phospho-glyceroyl phosphate + ADP. It functions in the pathway carbohydrate degradation; glycolysis; pyruvate from D-glyceraldehyde 3-phosphate: step 2/5. This chain is Phosphoglycerate kinase, found in Brevibacillus brevis (strain 47 / JCM 6285 / NBRC 100599).